Consider the following 198-residue polypeptide: Large ribosomal subunit protein bL25 (198 aa).

This sequence belongs to the bacterial ribosomal protein bL25 family. CTC subfamily. Part of the 50S ribosomal subunit; part of the 5S rRNA/L5/L18/L25 subcomplex. Contacts the 5S rRNA. Binds to the 5S rRNA independently of L5 and L18.

Its function is as follows. This is one of the proteins that binds to the 5S RNA in the ribosome where it forms part of the central protuberance. The chain is Large ribosomal subunit protein bL25 from Pseudomonas putida (strain W619).